The primary structure comprises 487 residues: Cyclic AMP-dependent transcription factor ATF-2 (487 aa).

A C2H2-type zinc finger spans residues 7-31 (FLCTAPGCGQRFTNEDHLAVHKHKH). The residue at position 34 (T34) is a Phosphothreonine; by PKC/PRKCH. At S44 the chain carries Phosphoserine. T51 carries the phosphothreonine; by MAPK11 and MAPK14 modification. T53 carries the post-translational modification Phosphothreonine; by MAPK1, MAPK3, MAPK11, MAPK12, MAPK14 and PLK3. T55 bears the Phosphothreonine; by VRK1 mark. Phosphoserine is present on residues S72 and S94. T98 carries the phosphothreonine modification. S103 is modified (phosphoserine; by PKC/PRKCA and PKC/PRKCB). Disordered stretches follow at residues 106-137 (EEPS…PLAQ) and 241-355 (PGIP…RQKR). S118 is modified (phosphoserine). Positions 264 to 275 (LTQQHPPVTNGD) are enriched in polar residues. The essential for its histone acetyltransferase activity stretch occupies residues 278–281 (KGHG). Positions 300 to 316 (PATSTTETPASPAHTTP) are enriched in low complexity. The residue at position 310 (S310) is a Phosphoserine. S322 carries the post-translational modification Phosphoserine; by PKC/PRKCA and PKC/PRKCB. A compositionally biased stretch (basic and acidic residues) spans 328–345 (AANEDPDEKRRKFLERNR). Positions 334-397 (DEKRRKFLER…AQLKQLLLAH (64 aa)) constitute a bZIP domain. The tract at residues 336-356 (KRRKFLERNRAAASRCRQKRK) is basic motif. K339 is subject to N6-acetyllysine. Phosphoserine; by PKC/PRKCA and PKC/PRKCB is present on S349. K356 is subject to N6-acetyllysine. Positions 362 to 390 (LEKKAEDLSSLNGQLQSEVTLLRNEVAQL) are leucine-zipper. Residues 387 to 396 (VAQLKQLLLA) carry the Nuclear export signal motif. Residues 407-453 (KKSGYHTADKDDSSEDLSVPSSPHTEAIQHSSVSTSNGVSSTSKAEA) form a disordered region. Residues S424 and S428 each carry the phosphoserine modification. Residues 425 to 436 (VPSSPHTEAIQH) show a composition bias toward polar residues. The span at 437–449 (SSVSTSNGVSSTS) shows a compositional bias: low complexity. A phosphoserine; by ATM mark is found at S472 and S480.

It belongs to the bZIP family. ATF subfamily. Binds DNA as a dimer and can form a homodimer in the absence of DNA. Can form a heterodimer with JUN. Heterodimerization is essential for its transcriptional activity. Interacts with SMAD3 and SMAD4. Interacts with the HK1/VDAC1 complex. Interacts with NBN, MRE11, XPO1, KAT5 and CUL3. Binds through its N-terminal region to UTF1 which acts as a coactivator of ATF2 transcriptional activity. In terms of processing, phosphorylation of Thr-51 by MAPK14 and MAPK11, and at Thr-53 by MAPK1/ERK2, MAPK3/ERK1, MAPK11, MAPK12 and MAPK14 in response to external stimulus like insulin causes increased transcriptional activity. Phosphorylated by PLK3 following hyperosmotic stress. Also phosphorylated and activated by JNK and CaMK4. ATM-mediated phosphorylation at Ser-472 and Ser-480 stimulates its function in DNA damage response. Phosphorylation at Ser-44, Thr-55 and Ser-103 activates its transcriptional activity. Phosphorylation at Thr-51 or Thr-53 enhances acetylation of histones H2B and H4.

The protein resides in the nucleus. Its subcellular location is the cytoplasm. It is found in the mitochondrion outer membrane. Functionally, transcriptional activator which regulates the transcription of various genes, including those involved in anti-apoptosis, cell growth, and DNA damage response. Dependent on its binding partner, binds to CRE (cAMP response element) consensus sequences (5'-TGACGTCA-3') or to AP-1 (activator protein 1) consensus sequences (5'-TGACTCA-3'). In the nucleus, contributes to global transcription and the DNA damage response, in addition to specific transcriptional activities that are related to cell development, proliferation and death. In the cytoplasm, interacts with and perturbs HK1- and VDAC1-containing complexes at the mitochondrial outer membrane, thereby impairing mitochondrial membrane potential, inducing mitochondrial leakage and promoting cell death. The phosphorylated form (mediated by ATM) plays a role in the DNA damage response and is involved in the ionizing radiation (IR)-induced S phase checkpoint control and in the recruitment of the MRN complex into the IR-induced foci (IRIF). Exhibits histone acetyltransferase (HAT) activity which specifically acetylates histones H2B and H4 in vitro. In concert with CUL3 and RBX1, promotes the degradation of KAT5 thereby attenuating its ability to acetylate and activate ATM. Can elicit oncogenic or tumor suppressor activities depending on the tissue or cell type. This chain is Cyclic AMP-dependent transcription factor ATF-2 (Atf2), found in Mus musculus (Mouse).